A 309-amino-acid polypeptide reads, in one-letter code: Homoserine kinase (309 aa).

85–95 (PYGLGLGSSGS) lines the ATP pocket.

This sequence belongs to the GHMP kinase family. Homoserine kinase subfamily.

The protein resides in the cytoplasm. The enzyme catalyses L-homoserine + ATP = O-phospho-L-homoserine + ADP + H(+). Its pathway is amino-acid biosynthesis; L-threonine biosynthesis; L-threonine from L-aspartate: step 4/5. Its function is as follows. Catalyzes the ATP-dependent phosphorylation of L-homoserine to L-homoserine phosphate. The chain is Homoserine kinase from Thermoplasma volcanium (strain ATCC 51530 / DSM 4299 / JCM 9571 / NBRC 15438 / GSS1).